The primary structure comprises 372 residues: Small ribosomal subunit protein mS77 (rPPR2) (372 aa).

Residues 1 to 28 (MKSFLLSRQAIHRISLLSSKTPTFCRNF) constitute a mitochondrion transit peptide. A disordered region spans residues 240 to 265 (DNSIRESETVDGEVEEEGFVPSDEVE). The segment covering 248–257 (TVDGEVEEEG) has biased composition (acidic residues).

In terms of assembly, component of the mitochondrial ribosome small subunit.

Its subcellular location is the mitochondrion. Functionally, required for karyogamy during female gametophyte development, when the two polar nuclei fuse to form the diploid central cell nucleus. The polypeptide is Small ribosomal subunit protein mS77 (rPPR2) (Arabidopsis thaliana (Mouse-ear cress)).